Consider the following 211-residue polypeptide: MGVRAQQKERTRRSLIEAAFSQLSAERSFASLSLREVSREAGIAPTSFYRHFRDVDELGLTMVDESGLMLRQLMRQARQRIAKGGSVIRTSVSTFMEFIGNNPNAFRLLLRERSGTSAAFRAAVAREIQHFIAELADYLELENHMPRSFTEAQAEAMVTIVFSAGAEVLDVDIEQRRQLEERLVLQLRMISKGAYYWYRREQEKLAASRVE.

In terms of domain architecture, HTH tetR-type spans 10–70 (RTRRSLIEAA…TMVDESGLML (61 aa)). The segment at residues 33-52 (SLREVSREAGIAPTSFYRHF) is a DNA-binding region (H-T-H motif).

In terms of assembly, homodimer.

It localises to the cytoplasm. Represses the transcription of fabB, involved in unsaturated fatty acid (UFA) biosynthesis. By controlling UFA production, FabR directly influences the physical properties of the membrane bilayer. The chain is HTH-type transcriptional repressor FabR from Yersinia pseudotuberculosis serotype O:1b (strain IP 31758).